Reading from the N-terminus, the 524-residue chain is Protein MGF 505-2R (524 aa).

This sequence belongs to the asfivirus MGF 505 family.

Its function is as follows. Plays a role in virus cell tropism, and may be required for efficient virus replication in macrophages. This chain is Protein MGF 505-2R, found in Ornithodoros (relapsing fever ticks).